Here is a 486-residue protein sequence, read N- to C-terminus: ATP synthase subunit beta (486 aa).

Residue 167–174 participates in ATP binding; it reads GGAGVGKT.

The protein belongs to the ATPase alpha/beta chains family. F-type ATPases have 2 components, CF(1) - the catalytic core - and CF(0) - the membrane proton channel. CF(1) has five subunits: alpha(3), beta(3), gamma(1), delta(1), epsilon(1). CF(0) has three main subunits: a(1), b(2) and c(9-12). The alpha and beta chains form an alternating ring which encloses part of the gamma chain. CF(1) is attached to CF(0) by a central stalk formed by the gamma and epsilon chains, while a peripheral stalk is formed by the delta and b chains.

The protein resides in the cell inner membrane. It catalyses the reaction ATP + H2O + 4 H(+)(in) = ADP + phosphate + 5 H(+)(out). Its function is as follows. Produces ATP from ADP in the presence of a proton gradient across the membrane. The catalytic sites are hosted primarily by the beta subunits. In Anaplasma marginale (strain St. Maries), this protein is ATP synthase subunit beta.